A 92-amino-acid chain; its full sequence is Small ribosomal subunit protein uS19c (92 aa).

The protein belongs to the universal ribosomal protein uS19 family.

Its subcellular location is the plastid. It is found in the chloroplast. Its function is as follows. Protein S19 forms a complex with S13 that binds strongly to the 16S ribosomal RNA. The protein is Small ribosomal subunit protein uS19c of Gracilaria tenuistipitata var. liui (Red alga).